We begin with the raw amino-acid sequence, 201 residues long: RILP-like protein 2 (201 aa).

In terms of domain architecture, RH1 spans Ser-14 to Gly-108. A coiled-coil region spans residues Leu-67–Ser-155. In terms of domain architecture, RH2 spans Arg-121 to Gln-197. The disordered stretch occupies residues Thr-175–Thr-201.

Belongs to the RILPL family.

It localises to the cytoplasm. It is found in the cytosol. Its subcellular location is the cytoskeleton. The protein localises to the microtubule organizing center. The protein resides in the centrosome. It localises to the cell projection. It is found in the cilium. In terms of biological role, involved in cell shape and neuronal morphogenesis, positively regulating the establishment and maintenance of dendritic spines. Plays a role in cellular protein transport. This chain is RILP-like protein 2 (rilpl2), found in Xenopus laevis (African clawed frog).